The following is an 829-amino-acid chain: MKYNPQAIEEKWQHIWEEKEMFRSEHGSDKPKYYVLEMFPYPSGNIHMGHVRNYSIGDVVARFKRMQGFNVLHPMGWDAFGLPAENAAIKHDTHPAKWTYSNIDNMRSQLKRLGYSYDWRRELATCDAEYYRWEQLFFLKFMEKGLIYRKKAPQNWCPKCNTVLANEQVIDGLCWRCDSVVEQRDLAQWFLRITSYAEELLADLEKLTGGWPDRVLTMQHNWIGKSVGAEIEFAVDGSDETVKVFTTRPDTVFGSTFMSIAPEHPLVEKLITGTGQEETVRAFVTRIRNMDRIERTADTLEKEGVFTGAYCINPLSGRRMPIYVANFVLAEYGTGAVMAVPAHDERDFEFARKYDLPMEVVIQPEGAELTPATMETAYTGQGTMVGSGQFSGLPNEEGKTKIAEWLEANGKGKRTVNYRLRDWNISRQRYWGAPIPVVYCEKCGIVPEKAENLPVRLPLDIKTRSDGRSPLGETPEFYECRCPACGEKARRETDTMDTFVESSWYFARYTSAGDNEAPFDAQALKYWLPVDQYIGGVEHAILHLLYARFFIKALRDCGYMDLDEPFANLLTQGMVLMDGAKMSKSKGNVVDPTEMISRYGADTVRLFCLFAAPPERDFDWSDSGIEGASRFVNRVWRLVEDLPAGMAPMAPCSSSSDDCTGAAAKDIRQKEHATVKKAGADIQNRFQFNTAISAVMELVNALYLTRDELGADEKGRRVLGSAVSSVLAMLAPITPHLCEELWEQLGHKDMLTARPWPRYDEDALLRDEVVIPVSVNGKLRSKMTVPAGTGKEELEKLALAEANVVRHTEGLTVRKVIVIPGKMVNVVAS.

The 'HIGH' region signature appears at 40 to 50 (PYPSGNIHMGH). A 'KMSKS' region motif is present at residues 581-585 (KMSKS). Position 584 (lysine 584) interacts with ATP.

It belongs to the class-I aminoacyl-tRNA synthetase family.

Its subcellular location is the cytoplasm. The enzyme catalyses tRNA(Leu) + L-leucine + ATP = L-leucyl-tRNA(Leu) + AMP + diphosphate. The chain is Leucine--tRNA ligase from Oleidesulfovibrio alaskensis (strain ATCC BAA-1058 / DSM 17464 / G20) (Desulfovibrio alaskensis).